Consider the following 266-residue polypeptide: Aspartate/glutamate leucyltransferase (266 aa).

This sequence belongs to the R-transferase family. Bpt subfamily.

Its subcellular location is the cytoplasm. It catalyses the reaction N-terminal L-glutamyl-[protein] + L-leucyl-tRNA(Leu) = N-terminal L-leucyl-L-glutamyl-[protein] + tRNA(Leu) + H(+). The enzyme catalyses N-terminal L-aspartyl-[protein] + L-leucyl-tRNA(Leu) = N-terminal L-leucyl-L-aspartyl-[protein] + tRNA(Leu) + H(+). In terms of biological role, functions in the N-end rule pathway of protein degradation where it conjugates Leu from its aminoacyl-tRNA to the N-termini of proteins containing an N-terminal aspartate or glutamate. The chain is Aspartate/glutamate leucyltransferase from Rhizorhabdus wittichii (strain DSM 6014 / CCUG 31198 / JCM 15750 / NBRC 105917 / EY 4224 / RW1) (Sphingomonas wittichii).